The sequence spans 303 residues: MTGIFAEQTVEVVKSAIETADGALDFYNKYLDQVIPWKTFDETIKELSRFKQEYSQEASVLVGDIKVLLMDSQDKYFEATQTVYEWCGVVTQLLSAYILLFDEYNEKKASAQKDILIRILDDGVNKLNEAQKSLLGSSQSFNNASGKLLALDSQLTNDFSEKSSYFQSQVDRIRKEAYAGAAAGIVAGPFGLIISYSIAAGVIEGKLIPELNDRLKAVQNFFTSLSVTVKQANKDIDAAKLKLATEIAAIGEIKTETETTRFYVDYDDLMLSLLKGAAKKMINTCNEYQQRHGKKTLLEVPDI.

Cysteines 87 and 285 form a disulfide. A helical transmembrane segment spans residues 179–199 (AGAAAGIVAGPFGLIISYSIA).

The protein belongs to the hemolysin E family. As to quaternary structure, monomer and oligomer. In periplasm, it is present as a monomer, while in outer membrane vesicles, it oligomerizes to form a pore structure that is active. The pore is formed by a dodecamer. In periplasm, it forms a disulfide bond, which prevents the oligomerization. In outer membrane vesicles, the redox status prevents formation of the disulfide bond, leading to oligomerization and pore formation.

The protein localises to the secreted. It localises to the periplasm. It is found in the host cell membrane. Functionally, toxin, which has some hemolytic activity towards mammalian cells. Acts by forming a pore-like structure upon contact with mammalian cells. The sequence is that of Hemolysin E (hlyE) from Salmonella paratyphi A (strain ATCC 9150 / SARB42).